Here is a 302-residue protein sequence, read N- to C-terminus: Methylsterol monooxygenase erg25A (302 aa).

Asparagine 5 carries N-linked (GlcNAc...) asparagine glycosylation. The next 3 helical transmembrane spans lie at asparagine 47–serine 67, tyrosine 105–methionine 125, and phenylalanine 132–leucine 152. The region spanning isoleucine 147 to threonine 283 is the Fatty acid hydroxylase domain. The Histidine box-1 motif lies at histidine 161–histidine 165. The Histidine box-2 motif lies at histidine 174–histidine 178. A helical transmembrane segment spans residues proline 193–methionine 213. A Histidine box-3 motif is present at residues tryptophan 258–arginine 264. N-linked (GlcNAc...) asparagine glycosylation is present at asparagine 269.

Belongs to the sterol desaturase family. It depends on Fe cation as a cofactor.

The protein localises to the endoplasmic reticulum membrane. It functions in the pathway steroid metabolism; ergosterol biosynthesis. Functionally, sterol-C4-methyl oxidase; part of the third module of ergosterol biosynthesis pathway that includes the late steps of the pathway. Erg25A is a catalytic component of the C-4 demethylation complex that catalyzes the conversion of 4,4-dimethylfecosterol into fecosterol via 4-methylfecosterol. The third module or late pathway involves the ergosterol synthesis itself through consecutive reactions that mainly occur in the endoplasmic reticulum (ER) membrane. Firstly, the squalene synthase erg9 catalyzes the condensation of 2 farnesyl pyrophosphate moieties to form squalene, which is the precursor of all steroids. Squalene synthase is crucial for balancing the incorporation of farnesyl diphosphate (FPP) into sterol and nonsterol isoprene synthesis. Secondly, squalene is converted into lanosterol by the consecutive action of the squalene epoxidase erg1 and the lanosterol synthase erg7. Then, the delta(24)-sterol C-methyltransferase erg6 methylates lanosterol at C-24 to produce eburicol. Eburicol is the substrate of the sterol 14-alpha demethylase encoded by cyp51A and cyp51B, to yield 4,4,24-trimethyl ergosta-8,14,24(28)-trienol. The C-14 reductase erg24 then reduces the C14=C15 double bond which leads to 4,4-dimethylfecosterol. A sequence of further demethylations at C-4, involving the C-4 demethylation complex containing the C-4 methylsterol oxidases erg25A or erg25B, the sterol-4-alpha-carboxylate 3-dehydrogenase erg26 and the 3-keto-steroid reductase erg27, leads to the production of fecosterol via 4-methylfecosterol. The C-8 sterol isomerase erg2 then catalyzes the reaction which results in unsaturation at C-7 in the B ring of sterols and thus converts fecosterol to episterol. The sterol-C5-desaturase erg3B then catalyzes the introduction of a C-5 double bond in the B ring to produce 5-dehydroepisterol. The 2 other sterol-C5-desaturases, erg3A and erg3C, seem to be less important in ergosterol biosynthesis. The C-22 sterol desaturase erg5 further converts 5-dehydroepisterol into ergosta-5,7,22,24(28)-tetraen-3beta-ol by forming the C-22(23) double bond in the sterol side chain. Finally, ergosta-5,7,22,24(28)-tetraen-3beta-ol is substrate of the C-24(28) sterol reductases erg4A and erg4B to produce ergosterol. Possible alternative sterol biosynthetic pathways might exist from fecosterol to ergosterol, depending on the activities of the erg3 isoforms. The sequence is that of Methylsterol monooxygenase erg25A from Aspergillus fumigatus (strain ATCC MYA-4609 / CBS 101355 / FGSC A1100 / Af293) (Neosartorya fumigata).